The primary structure comprises 98 residues: NADH-ubiquinone oxidoreductase chain 4L (98 aa).

The next 3 membrane-spanning stretches (helical) occupy residues 2 to 22 (PSISININLAFATALLGMLMF), 29 to 49 (SLLCLEGMMLSMFILSTLTIL), and 61 to 81 (ILLLVFAACEAAIGLALLVMV).

Belongs to the complex I subunit 4L family. In terms of assembly, core subunit of respiratory chain NADH dehydrogenase (Complex I) which is composed of 45 different subunits.

It is found in the mitochondrion inner membrane. The catalysed reaction is a ubiquinone + NADH + 5 H(+)(in) = a ubiquinol + NAD(+) + 4 H(+)(out). In terms of biological role, core subunit of the mitochondrial membrane respiratory chain NADH dehydrogenase (Complex I) which catalyzes electron transfer from NADH through the respiratory chain, using ubiquinone as an electron acceptor. Part of the enzyme membrane arm which is embedded in the lipid bilayer and involved in proton translocation. This chain is NADH-ubiquinone oxidoreductase chain 4L (MT-ND4L), found in Microcebus simmonsi (Simmons's mouse lemur).